Here is a 200-residue protein sequence, read N- to C-terminus: Sec-independent protein translocase protein TatB (200 aa).

The chain crosses the membrane as a helical span at residues 2 to 22; the sequence is LPDIGGTELLIIAAVALIVVG. The interval 160–200 is disordered; the sequence is KAPRKRASQKQEITVEAPKAVRAPRKRASKAGDSTASDIVS. Over residues 191–200 the composition is skewed to polar residues; the sequence is GDSTASDIVS.

Belongs to the TatB family. As to quaternary structure, the Tat system comprises two distinct complexes: a TatABC complex, containing multiple copies of TatA, TatB and TatC subunits, and a separate TatA complex, containing only TatA subunits. Substrates initially bind to the TatABC complex, which probably triggers association of the separate TatA complex to form the active translocon.

Its subcellular location is the cell inner membrane. Its function is as follows. Part of the twin-arginine translocation (Tat) system that transports large folded proteins containing a characteristic twin-arginine motif in their signal peptide across membranes. Together with TatC, TatB is part of a receptor directly interacting with Tat signal peptides. TatB may form an oligomeric binding site that transiently accommodates folded Tat precursor proteins before their translocation. In Caulobacter vibrioides (strain ATCC 19089 / CIP 103742 / CB 15) (Caulobacter crescentus), this protein is Sec-independent protein translocase protein TatB.